A 268-amino-acid polypeptide reads, in one-letter code: Undecaprenyl-diphosphatase (268 aa).

7 consecutive transmembrane segments (helical) span residues 7 to 27 (IFNA…PISS), 87 to 107 (LIYH…LCIY), 116 to 136 (FYSI…TEIS), 146 to 166 (IETP…WPGF), 187 to 207 (VEFS…LDVI), 210 to 230 (FYDI…SAFI), and 247 to 267 (SLIP…LFFM).

The protein belongs to the UppP family.

The protein resides in the cell membrane. It catalyses the reaction di-trans,octa-cis-undecaprenyl diphosphate + H2O = di-trans,octa-cis-undecaprenyl phosphate + phosphate + H(+). Catalyzes the dephosphorylation of undecaprenyl diphosphate (UPP). Confers resistance to bacitracin. The sequence is that of Undecaprenyl-diphosphatase from Buchnera aphidicola subsp. Baizongia pistaciae (strain Bp).